We begin with the raw amino-acid sequence, 228 residues long: Putative L-ribulose-5-phosphate 4-epimerase UlaF (228 aa).

Residues 26–27 (GN), 43–44 (SG), and 72–73 (SS) each bind substrate. Residues D74, H93, and H95 each contribute to the Zn(2+) site. Catalysis depends on D118, which acts as the Proton donor/acceptor. H167 serves as a coordination point for Zn(2+). Residue Y225 is the Proton donor/acceptor of the active site.

Belongs to the aldolase class II family. AraD/FucA subfamily. The cofactor is Zn(2+).

The enzyme catalyses L-ribulose 5-phosphate = D-xylulose 5-phosphate. It participates in cofactor degradation; L-ascorbate degradation; D-xylulose 5-phosphate from L-ascorbate: step 4/4. Catalyzes the isomerization of L-ribulose 5-phosphate to D-xylulose 5-phosphate. Is involved in the anaerobic L-ascorbate utilization. This chain is Putative L-ribulose-5-phosphate 4-epimerase UlaF, found in Shigella boydii serotype 4 (strain Sb227).